Reading from the N-terminus, the 469-residue chain is Glutamine synthetase (469 aa).

In terms of domain architecture, GS beta-grasp spans 14-99 (NDVKFVDLRF…VCDILDPVSG (86 aa)). One can recognise a GS catalytic domain in the interval 106–469 (RRGTAKKAEA…PVEYDMYYSA (364 aa)). Residues Glu-131 and Glu-133 each contribute to the Mg(2+) site. Glu-209 is a binding site for ATP. Mg(2+) contacts are provided by Glu-214 and Asp-221. L-glutamate contacts are provided by residues 265-266 (NG) and Gly-266. His-270 contacts Mg(2+). ATP contacts are provided by residues 272-274 (HQS) and Ser-274. L-glutamate-binding residues include Arg-322, Glu-328, and Arg-340. 3 residues coordinate ATP: Arg-340, Arg-345, and Lys-353. A Mg(2+)-binding site is contributed by Glu-358. Arg-360 is a binding site for L-glutamate. At Tyr-398 the chain carries O-AMP-tyrosine.

Belongs to the glutamine synthetase family. As to quaternary structure, oligomer of 12 subunits arranged in the form of two hexameric ring. Requires Mg(2+) as cofactor.

Its subcellular location is the cytoplasm. The enzyme catalyses L-glutamate + NH4(+) + ATP = L-glutamine + ADP + phosphate + H(+). Its activity is regulated as follows. The activity of this enzyme could be controlled by adenylation under conditions of abundant glutamine. Functionally, catalyzes the ATP-dependent biosynthesis of glutamine from glutamate and ammonia. This chain is Glutamine synthetase, found in Rhizobium leguminosarum bv. viciae.